A 207-amino-acid chain; its full sequence is Ribosomal RNA small subunit methyltransferase G (207 aa).

S-adenosyl-L-methionine is bound by residues G74, L79, 125 to 126 (VE), and R140.

It belongs to the methyltransferase superfamily. RNA methyltransferase RsmG family.

The protein localises to the cytoplasm. It carries out the reaction guanosine(527) in 16S rRNA + S-adenosyl-L-methionine = N(7)-methylguanosine(527) in 16S rRNA + S-adenosyl-L-homocysteine. In terms of biological role, specifically methylates the N7 position of guanine in position 527 of 16S rRNA. In Shewanella piezotolerans (strain WP3 / JCM 13877), this protein is Ribosomal RNA small subunit methyltransferase G.